The chain runs to 92 residues: Small ribosomal subunit protein uS19c (92 aa).

The protein belongs to the universal ribosomal protein uS19 family.

It is found in the plastid. The protein resides in the chloroplast. Its function is as follows. Protein S19 forms a complex with S13 that binds strongly to the 16S ribosomal RNA. This is Small ribosomal subunit protein uS19c from Nephroselmis olivacea (Green alga).